The following is a 603-amino-acid chain: Carbon catabolite repressor protein 4 homolog 2 (603 aa).

Residues 115-136 (ENNANEDDDLNRNNSAGSGSLA) are disordered. The segment covering 126-136 (RNNSAGSGSLA) has biased composition (low complexity). Glutamate 302 is a binding site for Mg(2+).

It belongs to the CCR4/nocturin family. As to quaternary structure, component of the CCR4-NOT complex, at least composed of CRR4 and CAF1 proteins. Requires Mg(2+) as cofactor.

The protein localises to the nucleus. It localises to the cytoplasm. The catalysed reaction is Exonucleolytic cleavage of poly(A) to 5'-AMP.. In terms of biological role, acts as a catalytic component of the CCR4-NOT core complex, which in the nucleus seems to be a general transcription factor, and in the cytoplasm the major mRNA deadenylase involved in mRNA turnover. This chain is Carbon catabolite repressor protein 4 homolog 2 (CCR4-2), found in Arabidopsis thaliana (Mouse-ear cress).